We begin with the raw amino-acid sequence, 206 residues long: Protein GrpE (206 aa).

The protein belongs to the GrpE family. As to quaternary structure, homodimer.

The protein localises to the cytoplasm. Its function is as follows. Participates actively in the response to hyperosmotic and heat shock by preventing the aggregation of stress-denatured proteins, in association with DnaK and GrpE. It is the nucleotide exchange factor for DnaK and may function as a thermosensor. Unfolded proteins bind initially to DnaJ; upon interaction with the DnaJ-bound protein, DnaK hydrolyzes its bound ATP, resulting in the formation of a stable complex. GrpE releases ADP from DnaK; ATP binding to DnaK triggers the release of the substrate protein, thus completing the reaction cycle. Several rounds of ATP-dependent interactions between DnaJ, DnaK and GrpE are required for fully efficient folding. This Shewanella sp. (strain W3-18-1) protein is Protein GrpE.